The sequence spans 347 residues: Autoinducer 2 import system permease protein LsrC (347 aa).

The next 9 helical transmembrane spans lie at 14–34 (LLAIVCLFVFLGALDSQYLSV), 39–59 (MVFSSAQILMLLAIGATMVML), 72–92 (GMCAVLLGVMLNAGYSLPVAC), 93–113 (LATLILGIVAGFFNGVLVAWL), 115–135 (IPAIVATLGTLGLYRGIMLLW), 155–175 (VFLGISAIGWFTLVLALLMAW), 213–233 (LNGGMAALAGIVFASQIGFIP), 249–269 (VLGGISLLGGSGTVIGAILGA), and 284–304 (IPAWWNDFIAGLVLLGVLVFD).

The protein belongs to the binding-protein-dependent transport system permease family. AraH/RbsC subfamily. As to quaternary structure, the complex is composed of two ATP-binding proteins (LsrA), two transmembrane proteins (LsrC and LsrD) and a solute-binding protein (LsrB).

Its subcellular location is the cell inner membrane. Its function is as follows. Part of the ABC transporter complex LsrABCD involved in autoinducer 2 (AI-2) import. Probably responsible for the translocation of the substrate across the membrane. The polypeptide is Autoinducer 2 import system permease protein LsrC (lsrC) (Salmonella typhi).